Consider the following 227-residue polypeptide: Cytochrome c oxidase subunit 2 (227 aa).

The Mitochondrial intermembrane segment spans residues 1 to 14 (MAYPFQLGLQDATS). The chain crosses the membrane as a helical span at residues 15–45 (PIMEELTNFHDHTLMIVFLISSLVLYIISLM). Residues 46-59 (LTTKLTHTSTMDAQ) are Mitochondrial matrix-facing. A helical transmembrane segment spans residues 60–87 (EVETIWTILPAVILILIALPSLRILYMM). Over 88–227 (DEINNPALTV…HFENWSASMI (140 aa)) the chain is Mitochondrial intermembrane. Cu cation is bound by residues H161, C196, E198, C200, H204, and M207. E198 is a binding site for Mg(2+).

Belongs to the cytochrome c oxidase subunit 2 family. As to quaternary structure, component of the cytochrome c oxidase (complex IV, CIV), a multisubunit enzyme composed of 14 subunits. The complex is composed of a catalytic core of 3 subunits MT-CO1, MT-CO2 and MT-CO3, encoded in the mitochondrial DNA, and 11 supernumerary subunits COX4I, COX5A, COX5B, COX6A, COX6B, COX6C, COX7A, COX7B, COX7C, COX8 and NDUFA4, which are encoded in the nuclear genome. The complex exists as a monomer or a dimer and forms supercomplexes (SCs) in the inner mitochondrial membrane with NADH-ubiquinone oxidoreductase (complex I, CI) and ubiquinol-cytochrome c oxidoreductase (cytochrome b-c1 complex, complex III, CIII), resulting in different assemblies (supercomplex SCI(1)III(2)IV(1) and megacomplex MCI(2)III(2)IV(2)). Found in a complex with TMEM177, COA6, COX18, COX20, SCO1 and SCO2. Interacts with TMEM177 in a COX20-dependent manner. Interacts with COX20. Interacts with COX16. It depends on Cu cation as a cofactor.

The protein localises to the mitochondrion inner membrane. The enzyme catalyses 4 Fe(II)-[cytochrome c] + O2 + 8 H(+)(in) = 4 Fe(III)-[cytochrome c] + 2 H2O + 4 H(+)(out). Functionally, component of the cytochrome c oxidase, the last enzyme in the mitochondrial electron transport chain which drives oxidative phosphorylation. The respiratory chain contains 3 multisubunit complexes succinate dehydrogenase (complex II, CII), ubiquinol-cytochrome c oxidoreductase (cytochrome b-c1 complex, complex III, CIII) and cytochrome c oxidase (complex IV, CIV), that cooperate to transfer electrons derived from NADH and succinate to molecular oxygen, creating an electrochemical gradient over the inner membrane that drives transmembrane transport and the ATP synthase. Cytochrome c oxidase is the component of the respiratory chain that catalyzes the reduction of oxygen to water. Electrons originating from reduced cytochrome c in the intermembrane space (IMS) are transferred via the dinuclear copper A center (CU(A)) of subunit 2 and heme A of subunit 1 to the active site in subunit 1, a binuclear center (BNC) formed by heme A3 and copper B (CU(B)). The BNC reduces molecular oxygen to 2 water molecules using 4 electrons from cytochrome c in the IMS and 4 protons from the mitochondrial matrix. In Berylmys bowersi (Bower's white-toothed rat), this protein is Cytochrome c oxidase subunit 2 (MT-CO2).